Consider the following 157-residue polypeptide: Capsid protein (157 aa).

At Ala2 the chain carries N-acetylalanine; by host.

This sequence belongs to the virgaviridae capsid protein family.

It is found in the virion. Functionally, capsid protein self-assembles to form rod-shaped virions about 18 nm in diameter with a central canal enclosing the viral genomic RNA. This Capsicum (peppers) protein is Capsid protein (CP).